Consider the following 333-residue polypeptide: Phosphate acyltransferase (333 aa).

The protein belongs to the PlsX family. As to quaternary structure, homodimer. Probably interacts with PlsY.

It is found in the cytoplasm. The catalysed reaction is a fatty acyl-[ACP] + phosphate = an acyl phosphate + holo-[ACP]. It functions in the pathway lipid metabolism; phospholipid metabolism. Catalyzes the reversible formation of acyl-phosphate (acyl-PO(4)) from acyl-[acyl-carrier-protein] (acyl-ACP). This enzyme utilizes acyl-ACP as fatty acyl donor, but not acyl-CoA. The sequence is that of Phosphate acyltransferase from Helicobacter hepaticus (strain ATCC 51449 / 3B1).